A 445-amino-acid chain; its full sequence is Xylose isomerase (445 aa).

Catalysis depends on residues histidine 107 and aspartate 110. The Mg(2+) site is built by glutamate 238, glutamate 274, histidine 277, aspartate 302, aspartate 313, aspartate 315, and aspartate 345.

It belongs to the xylose isomerase family. As to quaternary structure, homotetramer. Mg(2+) is required as a cofactor.

It localises to the cytoplasm. It catalyses the reaction alpha-D-xylose = alpha-D-xylulofuranose. In Bacillus pumilus (strain SAFR-032), this protein is Xylose isomerase.